We begin with the raw amino-acid sequence, 127 residues long: MAIVGLGTDIVEIERISAHVARSGDKLAKRVLTEAEFEIYQQHSQPSRYLAKRFAAKEAAAKALGTGIGRGVSFQHIHIGNTPDGAPTIDFTEGAQQRLTLLNGVVGHISIADEKSYAIATVILESR.

2 residues coordinate Mg(2+): aspartate 9 and glutamate 58.

Belongs to the P-Pant transferase superfamily. AcpS family. Requires Mg(2+) as cofactor.

The protein localises to the cytoplasm. The catalysed reaction is apo-[ACP] + CoA = holo-[ACP] + adenosine 3',5'-bisphosphate + H(+). Its function is as follows. Transfers the 4'-phosphopantetheine moiety from coenzyme A to a Ser of acyl-carrier-protein. The polypeptide is Holo-[acyl-carrier-protein] synthase (Shewanella oneidensis (strain ATCC 700550 / JCM 31522 / CIP 106686 / LMG 19005 / NCIMB 14063 / MR-1)).